The chain runs to 214 residues: Shikimate kinase (214 aa).

Gly35–Thr40 serves as a coordination point for ATP. Position 39 (Ser39) interacts with Mg(2+). Substrate-binding residues include Asp57, Arg81, and Gly103. Arg141 provides a ligand contact to ATP. Arg160 is a binding site for substrate.

This sequence belongs to the shikimate kinase family. In terms of assembly, monomer. It depends on Mg(2+) as a cofactor.

The protein resides in the cytoplasm. It carries out the reaction shikimate + ATP = 3-phosphoshikimate + ADP + H(+). The protein operates within metabolic intermediate biosynthesis; chorismate biosynthesis; chorismate from D-erythrose 4-phosphate and phosphoenolpyruvate: step 5/7. Functionally, catalyzes the specific phosphorylation of the 3-hydroxyl group of shikimic acid using ATP as a cosubstrate. The polypeptide is Shikimate kinase (Nitrobacter winogradskyi (strain ATCC 25391 / DSM 10237 / CIP 104748 / NCIMB 11846 / Nb-255)).